Reading from the N-terminus, the 227-residue chain is Orotidine 5'-phosphate decarboxylase (227 aa).

Substrate is bound by residues D8, K30, 59–68, T118, R178, Q187, G207, and R208; that span reads DLKLYDIPYT. Catalysis depends on K61, which acts as the Proton donor.

This sequence belongs to the OMP decarboxylase family. Type 1 subfamily. As to quaternary structure, homodimer.

It carries out the reaction orotidine 5'-phosphate + H(+) = UMP + CO2. The protein operates within pyrimidine metabolism; UMP biosynthesis via de novo pathway; UMP from orotate: step 2/2. Catalyzes the decarboxylation of orotidine 5'-monophosphate (OMP) to uridine 5'-monophosphate (UMP). This Helicobacter pylori (strain J99 / ATCC 700824) (Campylobacter pylori J99) protein is Orotidine 5'-phosphate decarboxylase.